The primary structure comprises 601 residues: Aspartate--tRNA ligase (601 aa).

Position 183 (Glu183) interacts with L-aspartate. The segment at 207–210 (QIFK) is aspartate. Arg229 is an L-aspartate binding site. ATP is bound by residues 229–231 (RDE) and Gln238. His457 is a binding site for L-aspartate. Glu497 contacts ATP. Arg504 is a binding site for L-aspartate. ATP is bound at residue 549–552 (GIDR).

The protein belongs to the class-II aminoacyl-tRNA synthetase family. Type 1 subfamily. In terms of assembly, homodimer.

Its subcellular location is the cytoplasm. The enzyme catalyses tRNA(Asp) + L-aspartate + ATP = L-aspartyl-tRNA(Asp) + AMP + diphosphate. Catalyzes the attachment of L-aspartate to tRNA(Asp) in a two-step reaction: L-aspartate is first activated by ATP to form Asp-AMP and then transferred to the acceptor end of tRNA(Asp). This Leptospira interrogans serogroup Icterohaemorrhagiae serovar Lai (strain 56601) protein is Aspartate--tRNA ligase.